A 358-amino-acid chain; its full sequence is 3-isopropylmalate dehydrogenase (358 aa).

Residue 79–92 (GPKWEHLPPDEQPE) participates in NAD(+) binding. Substrate contacts are provided by Arg-100, Arg-110, Arg-139, and Asp-227. 3 residues coordinate Mg(2+): Asp-227, Asp-251, and Asp-255. 285–297 (GSAPDIAGKGVAN) serves as a coordination point for NAD(+).

It belongs to the isocitrate and isopropylmalate dehydrogenases family. LeuB type 1 subfamily. Homodimer. Requires Mg(2+) as cofactor. Mn(2+) serves as cofactor.

The protein resides in the cytoplasm. It carries out the reaction (2R,3S)-3-isopropylmalate + NAD(+) = 4-methyl-2-oxopentanoate + CO2 + NADH. It functions in the pathway amino-acid biosynthesis; L-leucine biosynthesis; L-leucine from 3-methyl-2-oxobutanoate: step 3/4. Catalyzes the oxidation of 3-carboxy-2-hydroxy-4-methylpentanoate (3-isopropylmalate) to 3-carboxy-4-methyl-2-oxopentanoate. The product decarboxylates to 4-methyl-2 oxopentanoate. This is 3-isopropylmalate dehydrogenase from Pseudoalteromonas translucida (strain TAC 125).